Reading from the N-terminus, the 61-residue chain is Small ribosomal subunit protein uS14 (61 aa).

Residues C24, C27, C40, and C43 each contribute to the Zn(2+) site.

It belongs to the universal ribosomal protein uS14 family. Zinc-binding uS14 subfamily. As to quaternary structure, part of the 30S ribosomal subunit. Contacts proteins S3 and S10. Requires Zn(2+) as cofactor.

In terms of biological role, binds 16S rRNA, required for the assembly of 30S particles and may also be responsible for determining the conformation of the 16S rRNA at the A site. This Dehalococcoides mccartyi (strain ATCC BAA-2266 / KCTC 15142 / 195) (Dehalococcoides ethenogenes (strain 195)) protein is Small ribosomal subunit protein uS14.